The following is an 85-amino-acid chain: Phycobilisome 9.7 kDa linker polypeptide, phycocyanin-associated, rod (85 aa).

Residues 16 to 74 (NRVFVYEVEGLRQNEQTDNNRYQIRNSSTIEIQVPYSRMNEEDRRITRLGGRIVNIRPA) enclose the CpcD-like domain.

It belongs to the phycobilisome linker protein family.

Its subcellular location is the cellular thylakoid membrane. Its function is as follows. Rod linker protein, associated with phycocyanin. Linker polypeptides determine the state of aggregation and the location of the disk-shaped phycobiliprotein units within the phycobilisome and modulate their spectroscopic properties in order to mediate a directed and optimal energy transfer. The polypeptide is Phycobilisome 9.7 kDa linker polypeptide, phycocyanin-associated, rod (cpcD2) (Microchaete diplosiphon (Fremyella diplosiphon)).